A 680-amino-acid chain; its full sequence is DNA ligase (680 aa).

An NAD(+)-binding site is contributed by 32–36 (DTVYD). The disordered stretch occupies residues 47-66 (QNDPGLQRPDSPTQRVGGAP). NAD(+)-binding positions include 81 to 82 (SL) and E115. The active-site N6-AMP-lysine intermediate is the K117. Positions 138, 175, 291, and 315 each coordinate NAD(+). C409, C412, C427, and C432 together coordinate Zn(2+). Positions 602–680 (DADGVLQGKT…EADLTALLQP (79 aa)) constitute a BRCT domain.

This sequence belongs to the NAD-dependent DNA ligase family. LigA subfamily. Mg(2+) serves as cofactor. Mn(2+) is required as a cofactor.

It carries out the reaction NAD(+) + (deoxyribonucleotide)n-3'-hydroxyl + 5'-phospho-(deoxyribonucleotide)m = (deoxyribonucleotide)n+m + AMP + beta-nicotinamide D-nucleotide.. Its function is as follows. DNA ligase that catalyzes the formation of phosphodiester linkages between 5'-phosphoryl and 3'-hydroxyl groups in double-stranded DNA using NAD as a coenzyme and as the energy source for the reaction. It is essential for DNA replication and repair of damaged DNA. This Synechococcus sp. (strain CC9605) protein is DNA ligase.